The sequence spans 166 residues: Ribosome maturation factor RimP (166 aa).

This sequence belongs to the RimP family.

The protein resides in the cytoplasm. Required for maturation of 30S ribosomal subunits. In Paramagnetospirillum magneticum (strain ATCC 700264 / AMB-1) (Magnetospirillum magneticum), this protein is Ribosome maturation factor RimP.